Reading from the N-terminus, the 223-residue chain is Dephospho-CoA kinase (223 aa).

One can recognise a DPCK domain in the interval 3–204 (VFGLSGGAGS…AGRHRFRVAR (202 aa)). Residue 11–16 (GSGKST) coordinates ATP.

It belongs to the CoaE family.

The protein resides in the cytoplasm. The enzyme catalyses 3'-dephospho-CoA + ATP = ADP + CoA + H(+). Its pathway is cofactor biosynthesis; coenzyme A biosynthesis; CoA from (R)-pantothenate: step 5/5. In terms of biological role, catalyzes the phosphorylation of the 3'-hydroxyl group of dephosphocoenzyme A to form coenzyme A. This chain is Dephospho-CoA kinase, found in Anaplasma marginale (strain St. Maries).